The sequence spans 278 residues: Protein lyl-1 (278 aa).

Residues 1 to 46 (MCPPQARAEVGSAMTEKTEMVCASSPAPAPPSKPASPGPLSTEEVD) form a disordered region. Positions 27-37 (APAPPSKPASP) are enriched in pro residues. The bHLH domain occupies 149-201 (ARRVFTNSRERWRQQHVNGAFAELRKLLPTHPPDRKLSKNEVLRLAMKYIGFL). A disordered region spans residues 212–278 (LTSGPSAPGS…EQTSLSPEVR (67 aa)). Residues 269 to 278 (EQTSLSPEVR) show a composition bias toward polar residues. Phosphoserine is present on Ser-274.

In terms of assembly, efficient DNA binding requires dimerization with another bHLH protein.

It is found in the nucleus. The chain is Protein lyl-1 (Lyl1) from Mus musculus (Mouse).